We begin with the raw amino-acid sequence, 275 residues long: Large ribosomal subunit protein uL2 (275 aa).

A disordered region spans residues 208-275; sequence AGAKRWRGRR…NMIIRDRRKK (68 aa). Composition is skewed to basic residues over residues 209–219 and 254–263; these read GAKRWRGRRPT and KGYKTRRNKR.

The protein belongs to the universal ribosomal protein uL2 family. Part of the 50S ribosomal subunit. Forms a bridge to the 30S subunit in the 70S ribosome.

Its function is as follows. One of the primary rRNA binding proteins. Required for association of the 30S and 50S subunits to form the 70S ribosome, for tRNA binding and peptide bond formation. It has been suggested to have peptidyltransferase activity; this is somewhat controversial. Makes several contacts with the 16S rRNA in the 70S ribosome. The sequence is that of Large ribosomal subunit protein uL2 from Coxiella burnetii (strain CbuG_Q212) (Coxiella burnetii (strain Q212)).